The following is a 724-amino-acid chain: Transcription factor dcp-66 (724 aa).

Polar residues-rich tracts occupy residues 1 to 12 (MAQVQQVPSSPM) and 56 to 70 (GAST…QLSP). Disordered regions lie at residues 1–23 (MAQV…GNGL) and 55–129 (NGAS…KRRL). Positions 85–95 (AQEKIKLKDDI) are enriched in basic and acidic residues. Positions 105–119 (DDDDMEDEELGDEIN) are enriched in acidic residues. Residues 186–216 (EEQLRERLNMRREAENQLREEEAKLLVLRKM) adopt a coiled-coil conformation. 2 disordered regions span residues 328–361 (KELS…QITQ) and 523–590 (AAPA…QLQQ). Positions 332–358 (AAETNASASASPAVQQSQQAQQPQQAQ) are enriched in low complexity. Composition is skewed to polar residues over residues 527-541 (TSQT…TVSS) and 551-564 (IPSS…TQAV). The span at 565-590 (KTSTPIHSTPKSSSSSAKKTAAQLQQ) shows a compositional bias: low complexity.

As to expression, expressed at low levels in excretory cell, pharynx, vulva, and posterior neurons in adults. Strongly expressed in the excretory cell and more weakly in the pharynx in larva. Embryonic expression in the excretory cell.

The protein localises to the nucleus. Its function is as follows. Transcription factor which binds to the 5'-CCATACATTA-3' motif found in the promoter region of pgp-12 and activates its expression in the excretory cell. This Caenorhabditis elegans protein is Transcription factor dcp-66.